Here is a 237-residue protein sequence, read N- to C-terminus: MDAREIIKYIQESEKKTPVKVYIKGNLSEINWEQEGIKSFITGNTGVIFGEWKIVSKLMEANQKNIEDFVLENDRANSAIPLLDLKGIHARIEPGAIIREKVEIGNNAVIMMGASINIGAVIGEGTMIDMNVVVGGRGTIGKNCHIGAGAVIAGVIEPPSATPVIIEDDVVIGANAVVLEGIRVGKGSVVAAGAVVVQDVPPNVVVAGTPARVIKEIDEKTKSKTEIVKELRSLIEE.

It belongs to the transferase hexapeptide repeat family. DapH subfamily.

It catalyses the reaction (S)-2,3,4,5-tetrahydrodipicolinate + acetyl-CoA + H2O = L-2-acetamido-6-oxoheptanedioate + CoA. It participates in amino-acid biosynthesis; L-lysine biosynthesis via DAP pathway; LL-2,6-diaminopimelate from (S)-tetrahydrodipicolinate (acetylase route): step 1/3. Catalyzes the transfer of an acetyl group from acetyl-CoA to tetrahydrodipicolinate. The protein is 2,3,4,5-tetrahydropyridine-2,6-dicarboxylate N-acetyltransferase of Alkaliphilus metalliredigens (strain QYMF).